Reading from the N-terminus, the 162-residue chain is Phosphopantetheine adenylyltransferase (162 aa).

A substrate-binding site is contributed by Ser-11. ATP contacts are provided by residues Ser-11 to Phe-12 and His-19. Residues Lys-43, Leu-75, and Arg-89 each coordinate substrate. ATP-binding positions include Gly-90–Arg-92, Glu-100, and Phe-125–Ser-131.

Belongs to the bacterial CoaD family. As to quaternary structure, homohexamer. Mg(2+) is required as a cofactor.

It is found in the cytoplasm. It catalyses the reaction (R)-4'-phosphopantetheine + ATP + H(+) = 3'-dephospho-CoA + diphosphate. Its pathway is cofactor biosynthesis; coenzyme A biosynthesis; CoA from (R)-pantothenate: step 4/5. In terms of biological role, reversibly transfers an adenylyl group from ATP to 4'-phosphopantetheine, yielding dephospho-CoA (dPCoA) and pyrophosphate. This is Phosphopantetheine adenylyltransferase from Petrotoga mobilis (strain DSM 10674 / SJ95).